The chain runs to 440 residues: Trigger factor (440 aa).

In terms of domain architecture, PPIase FKBP-type spans 162-247 (GDRVTFDFTG…LKKIEKFQLP (86 aa)).

The protein belongs to the FKBP-type PPIase family. Tig subfamily.

The protein resides in the cytoplasm. The enzyme catalyses [protein]-peptidylproline (omega=180) = [protein]-peptidylproline (omega=0). Functionally, involved in protein export. Acts as a chaperone by maintaining the newly synthesized protein in an open conformation. Functions as a peptidyl-prolyl cis-trans isomerase. The protein is Trigger factor of Hamiltonella defensa subsp. Acyrthosiphon pisum (strain 5AT).